The primary structure comprises 568 residues: Peptidoglycan D,D-transpeptidase FtsI (568 aa).

A helical membrane pass occupies residues 19–39 (FVTLCSIVFLFLVILTLRIIF). Ser-302 (acyl-ester intermediate) is an active-site residue.

It belongs to the transpeptidase family. FtsI subfamily.

It is found in the cell inner membrane. The catalysed reaction is Preferential cleavage: (Ac)2-L-Lys-D-Ala-|-D-Ala. Also transpeptidation of peptidyl-alanyl moieties that are N-acyl substituents of D-alanine.. Its pathway is cell wall biogenesis; peptidoglycan biosynthesis. Catalyzes cross-linking of the peptidoglycan cell wall at the division septum. This is Peptidoglycan D,D-transpeptidase FtsI from Buchnera aphidicola subsp. Schizaphis graminum (strain Sg).